The following is a 172-amino-acid chain: MDLHHYVQDIPDFPKPGILFRDISPMLRDPVGWAEVMDRLGVLCDSLKPDLIVGIEARGFIVGMGLATHKKLGFVPVRKPGKLPGKVYGIDYALEYGTDRLEIHADAMRGQPRILVVDDLLATGGTASATADLVKQAGGQLVGCAFIVELTELKGRGRLPGDIQVESLIHYS.

This sequence belongs to the purine/pyrimidine phosphoribosyltransferase family. In terms of assembly, homodimer.

It is found in the cytoplasm. The catalysed reaction is AMP + diphosphate = 5-phospho-alpha-D-ribose 1-diphosphate + adenine. It participates in purine metabolism; AMP biosynthesis via salvage pathway; AMP from adenine: step 1/1. Catalyzes a salvage reaction resulting in the formation of AMP, that is energically less costly than de novo synthesis. The chain is Adenine phosphoribosyltransferase from Synechococcus sp. (strain CC9311).